Here is a 152-residue protein sequence, read N- to C-terminus: Transcriptional regulator MraZ (152 aa).

SpoVT-AbrB domains follow at residues 5-52 and 81-124; these read ATLV…PLPE and ASEC…DETT.

It belongs to the MraZ family. In terms of assembly, forms oligomers.

The protein resides in the cytoplasm. The protein localises to the nucleoid. In terms of biological role, negatively regulates its own expression and that of the subsequent genes in the proximal part of the division and cell wall (dcw) gene cluster. Acts by binding directly to DNA. May also regulate the expression of genes outside the dcw cluster. The chain is Transcriptional regulator MraZ from Klebsiella pneumoniae (strain 342).